We begin with the raw amino-acid sequence, 157 residues long: Oleosin-B1 (157 aa).

Residues 2-20 (GILRKKKHERNASFKSVLT) are polar. The tract at residues 21–138 (SILATQAATF…AAPAAAPAAA (118 aa)) is hydrophobic. 3 helical membrane passes run 22-42 (ILATQAATFLLLISGVSLAGT), 45-65 (AFIATMPLFVVFSPILVPAGI), and 72-92 (TGLAAAGGAGATAVTIILWLY). A run of 9 repeats spans residues 119 to 122 (PRAA), 123 to 126 (PAAA), 127 to 130 (PAAA), 131 to 134 (PAAA), 135 to 138 (PAAA), 139 to 142 (PAPK), 143 to 146 (PAAA), 147 to 150 (PAPK), and 151 to 154 (PAAP). The 9 X 4 AA tandem repeats of P-[AR]-[AP]-[AKP] stretch occupies residues 119–122 (PRAA). A disordered region spans residues 137–157 (AAPAPKPAAAPAPKPAAPPAL). Over residues 138-157 (APAPKPAAAPAPKPAAPPAL) the composition is skewed to pro residues.

The protein belongs to the oleosin family. In terms of tissue distribution, the full-length protein is found in the tapetal lipid bodies of immature anthers, the proteolytically cleaved C-terminal product is found on the coats of pollen grains. Highest expression is in microspores entering and undergoing mitosis. No expression is observed in male-sterile plants, green tissues or roots.

It is found in the lipid droplet. Its subcellular location is the membrane. In terms of biological role, many of the major pollen coat proteins are derived from endoproteolytic cleavage of oleosin-like proteins. The chain is Oleosin-B1 (OlnB1) from Brassica napus (Rape).